The primary structure comprises 359 residues: Protein disulfide-isomerase C17H9.14c (359 aa).

The N-terminal stretch at 1–19 (MRLPLLSFVIFALFALVFA) is a signal peptide. 2 consecutive Thioredoxin domains span residues 20–130 (SGVV…EKTG) and 134–250 (RKIV…KKSG). Residues Cys51 and Cys54 each act as nucleophile in the active site. 2 disulfide bridges follow: Cys51/Cys54 and Cys170/Cys173.

The protein belongs to the protein disulfide isomerase family.

It carries out the reaction Catalyzes the rearrangement of -S-S- bonds in proteins.. In terms of biological role, participates in the folding of proteins containing disulfide bonds, may be involved in glycosylation, prolyl hydroxylation and triglyceride transfer. This Schizosaccharomyces pombe (strain 972 / ATCC 24843) (Fission yeast) protein is Protein disulfide-isomerase C17H9.14c.